The primary structure comprises 457 residues: Ribulose bisphosphate carboxylase-like protein (457 aa).

Mg(2+)-binding residues include lysine 199, aspartate 201, and glutamate 202. At lysine 199 the chain carries N6-carboxylysine. Residues 426–457 (AIAAFGKPAHGQAASPQPSEQASEPDAAGGDS) are disordered.

The protein belongs to the RuBisCO large chain family. Type IV subfamily. Mg(2+) is required as a cofactor.

Its function is as follows. May be involved in sulfur metabolism and oxidative stress response. Does not show RuBisCO activity. In Allochromatium vinosum (strain ATCC 17899 / DSM 180 / NBRC 103801 / NCIMB 10441 / D) (Chromatium vinosum), this protein is Ribulose bisphosphate carboxylase-like protein.